The sequence spans 165 residues: Regulator of ribonuclease activity A (165 aa).

It belongs to the RraA family. As to quaternary structure, homotrimer. Binds to both RNA-binding sites in the C-terminal region of Rne and to RhlB.

It localises to the cytoplasm. In terms of biological role, globally modulates RNA abundance by binding to RNase E (Rne) and regulating its endonucleolytic activity. Can modulate Rne action in a substrate-dependent manner by altering the composition of the degradosome. Modulates RNA-binding and helicase activities of the degradosome. The protein is Regulator of ribonuclease activity A of Actinobacillus pleuropneumoniae serotype 7 (strain AP76).